Consider the following 296-residue polypeptide: Phosphatidylglycerol--prolipoprotein diacylglyceryl transferase (296 aa).

3 helical membrane-spanning segments follow: residues Leu17–Gly37, Met59–Tyr79, and Gly97–Trp117. Arg142 is an a 1,2-diacyl-sn-glycero-3-phospho-(1'-sn-glycerol) binding site. 2 helical membrane passes run Met230–Phe250 and Leu265–Trp285.

Belongs to the Lgt family.

The protein resides in the cell inner membrane. It catalyses the reaction L-cysteinyl-[prolipoprotein] + a 1,2-diacyl-sn-glycero-3-phospho-(1'-sn-glycerol) = an S-1,2-diacyl-sn-glyceryl-L-cysteinyl-[prolipoprotein] + sn-glycerol 1-phosphate + H(+). The protein operates within protein modification; lipoprotein biosynthesis (diacylglyceryl transfer). In terms of biological role, catalyzes the transfer of the diacylglyceryl group from phosphatidylglycerol to the sulfhydryl group of the N-terminal cysteine of a prolipoprotein, the first step in the formation of mature lipoproteins. The sequence is that of Phosphatidylglycerol--prolipoprotein diacylglyceryl transferase from Burkholderia mallei (strain NCTC 10247).